Consider the following 360-residue polypeptide: MHLTRLNIERVRNLKTVALHGLQPFNVFYGANGSGKTSILEAIHLLATGRSFRTHIPKNYIQYEADDAIVFAQSATEKIGMQKLASGEQLMKVNGDTVATQGQLAKLLPLQHIDPQSTEIIDHGAKPRRQLLDWLMFHVEPEFYFAWQYYSRALKQRNTLLKTRRNLSLADLEPWNKMLSNYGEILHSQRLSIVEQWNVYFQNDLSQLLPDLEIELEYSPGFHTEQGLMQDLLNQHQKDIERRYTEYGPHRADLRLKTLFGHADDVLSRGQKKLLIIALKLSQIAMLHASNKETVVLLDDLTAELDLTAQQRLIERLSQLGSQVFMTTLDRASVKKHLHDLSISYQLFSVESGQVSLAAP.

30–37 (GANGSGKT) contributes to the ATP binding site.

The protein belongs to the RecF family.

Its subcellular location is the cytoplasm. The RecF protein is involved in DNA metabolism; it is required for DNA replication and normal SOS inducibility. RecF binds preferentially to single-stranded, linear DNA. It also seems to bind ATP. The protein is DNA replication and repair protein RecF of Acinetobacter baumannii (strain SDF).